We begin with the raw amino-acid sequence, 430 residues long: Tol-Pal system protein TolB (430 aa).

Residues 1-21 (MKQALRVAFGFLILWASVLHA) form the signal peptide.

It belongs to the TolB family. In terms of assembly, the Tol-Pal system is composed of five core proteins: the inner membrane proteins TolA, TolQ and TolR, the periplasmic protein TolB and the outer membrane protein Pal. They form a network linking the inner and outer membranes and the peptidoglycan layer.

The protein resides in the periplasm. Its function is as follows. Part of the Tol-Pal system, which plays a role in outer membrane invagination during cell division and is important for maintaining outer membrane integrity. TolB occupies a key intermediary position in the Tol-Pal system because it communicates directly with both membrane-embedded components, Pal in the outer membrane and TolA in the inner membrane. This chain is Tol-Pal system protein TolB, found in Shigella dysenteriae serotype 1 (strain Sd197).